Here is a 259-residue protein sequence, read N- to C-terminus: UPF0246 protein Aave_1172 (259 aa).

It belongs to the UPF0246 family.

The protein is UPF0246 protein Aave_1172 of Paracidovorax citrulli (strain AAC00-1) (Acidovorax citrulli).